Here is a 181-residue protein sequence, read N- to C-terminus: ADP-ribosylation factor 1 (181 aa).

Glycine 2 carries N-myristoyl glycine lipidation. Residues 24–31, 67–71, and 126–129 contribute to the GTP site; these read GLDAAGKT, DVGGQ, and NKQD.

The protein belongs to the small GTPase superfamily. Arf family.

Its subcellular location is the golgi apparatus. The catalysed reaction is GTP + H2O = GDP + phosphate + H(+). Functionally, GTP-binding protein involved in protein trafficking; may modulate vesicle budding and uncoating within the Golgi apparatus. This chain is ADP-ribosylation factor 1 (ARF1), found in Chlamydomonas reinhardtii (Chlamydomonas smithii).